The chain runs to 513 residues: Zinc finger CCCH-type with G patch domain-containing protein (513 aa).

Met-1 is modified (N-acetylmethionine). Residues 92–131 (PVAPGAELETVPSRETGPGPTEPGQEEDDGEDEEGGAALS) form a disordered region. Residues 115–126 (GQEEDDGEDEEG) show a composition bias toward acidic residues. A C3H1-type zinc finger spans residues 176 to 202 (KSLKPCPFFLEGKCRFQENCRFSHGQV). The segment at 267–298 (LPPLRTDPAGSSDSDGSDADDPSYARVVEPGA) is disordered. Ser-278 and Ser-355 each carry phosphoserine. The 47-residue stretch at 315 to 361 (TRGIGSRLLAKMGYEFGKGLGRRADGRVEPVHAVVLPRGKSLDQCAE) folds into the G-patch domain. Disordered regions lie at residues 367 to 394 (TRAG…PPPR) and 493 to 513 (QEAG…MTEF). Residues 497–513 (LQREQRKADTHKKMTEF) are compositionally biased toward basic and acidic residues.

In terms of assembly, interacts with CHD4/Mi-2; the interaction is direct.

It localises to the nucleus. Transcription repressor that specifically binds the 5'-GGAG[GA]A[GA]A-3' consensus sequence. Represses transcription by recruiting the chromatin multiprotein complex NuRD to target promoters. Negatively regulates expression of EGFR, a gene involved in cell proliferation, survival and migration. Its ability to repress genes of the EGFR pathway suggest it may act as a tumor suppressor. The protein is Zinc finger CCCH-type with G patch domain-containing protein (ZGPAT) of Ovis aries (Sheep).